A 251-amino-acid chain; its full sequence is uncharacterized protein (251 aa).

The protein localises to the mitochondrion. This is an uncharacterized protein from Arabidopsis thaliana (Mouse-ear cress).